The following is a 234-amino-acid chain: LexA repressor (234 aa).

The segment at residues 41–61 is a DNA-binding region (H-T-H motif); the sequence is RAEIANELGFKSANAAEEHLQ. Catalysis depends on for autocatalytic cleavage activity residues Ser152 and Lys189.

Belongs to the peptidase S24 family. Homodimer.

It catalyses the reaction Hydrolysis of Ala-|-Gly bond in repressor LexA.. Represses a number of genes involved in the response to DNA damage (SOS response), including recA and lexA. In the presence of single-stranded DNA, RecA interacts with LexA causing an autocatalytic cleavage which disrupts the DNA-binding part of LexA, leading to derepression of the SOS regulon and eventually DNA repair. This is LexA repressor from Polaromonas sp. (strain JS666 / ATCC BAA-500).